A 547-amino-acid chain; its full sequence is Chaperonin GroEL (547 aa).

ATP is bound by residues 30–33 (TLGP), lysine 51, 87–91 (DGTTT), glycine 415, and aspartate 495.

It belongs to the chaperonin (HSP60) family. Forms a cylinder of 14 subunits composed of two heptameric rings stacked back-to-back. Interacts with the co-chaperonin GroES.

The protein resides in the cytoplasm. It catalyses the reaction ATP + H2O + a folded polypeptide = ADP + phosphate + an unfolded polypeptide.. Its function is as follows. Together with its co-chaperonin GroES, plays an essential role in assisting protein folding. The GroEL-GroES system forms a nano-cage that allows encapsulation of the non-native substrate proteins and provides a physical environment optimized to promote and accelerate protein folding. The sequence is that of Chaperonin GroEL from Thiobacillus denitrificans (strain ATCC 25259 / T1).